The chain runs to 178 residues: ATP-dependent protease subunit HslV (178 aa).

Residue T8 is part of the active site. 3 residues coordinate Na(+): G163, C166, and T169.

Belongs to the peptidase T1B family. HslV subfamily. A double ring-shaped homohexamer of HslV is capped on each side by a ring-shaped HslU homohexamer. The assembly of the HslU/HslV complex is dependent on binding of ATP.

Its subcellular location is the cytoplasm. It carries out the reaction ATP-dependent cleavage of peptide bonds with broad specificity.. With respect to regulation, allosterically activated by HslU binding. Functionally, protease subunit of a proteasome-like degradation complex believed to be a general protein degrading machinery. This is ATP-dependent protease subunit HslV from Treponema denticola (strain ATCC 35405 / DSM 14222 / CIP 103919 / JCM 8153 / KCTC 15104).